The following is a 526-amino-acid chain: Peptide chain release factor 3 (526 aa).

Residues 8–277 (NKRRTFAIIS…GLTEWAPKPQ (270 aa)) enclose the tr-type G domain. Residues 17–24 (SHPDAGKT), 85–89 (DTPGH), and 139–142 (NKLD) each bind GTP.

This sequence belongs to the TRAFAC class translation factor GTPase superfamily. Classic translation factor GTPase family. PrfC subfamily.

It localises to the cytoplasm. Its function is as follows. Increases the formation of ribosomal termination complexes and stimulates activities of RF-1 and RF-2. It binds guanine nucleotides and has strong preference for UGA stop codons. It may interact directly with the ribosome. The stimulation of RF-1 and RF-2 is significantly reduced by GTP and GDP, but not by GMP. This chain is Peptide chain release factor 3, found in Actinobacillus pleuropneumoniae serotype 7 (strain AP76).